The primary structure comprises 467 residues: 5-phosphohydroxy-L-lysine phospho-lyase (467 aa).

N6-(pyridoxal phosphate)lysine is present on Lys278.

This sequence belongs to the class-III pyridoxal-phosphate-dependent aminotransferase family. Homotetramer. Requires pyridoxal 5'-phosphate as cofactor.

It localises to the mitochondrion. The catalysed reaction is (5R)-5-phosphooxy-L-lysine + H2O = (S)-2-amino-6-oxohexanoate + NH4(+) + phosphate. In terms of biological role, catalyzes the pyridoxal-phosphate-dependent breakdown of 5-phosphohydroxy-L-lysine, converting it to ammonia, inorganic phosphate and 2-aminoadipate semialdehyde. The chain is 5-phosphohydroxy-L-lysine phospho-lyase (Phykpl) from Mus musculus (Mouse).